We begin with the raw amino-acid sequence, 574 residues long: Zinc finger protein 394 (574 aa).

Phosphoserine is present on Ser-12. Lys-40 participates in a covalent cross-link: Glycyl lysine isopeptide (Lys-Gly) (interchain with G-Cter in SUMO2). The region spanning 64 to 146 (RLHFRQLRYQ…AVVRALQRAL (83 aa)) is the SCAN box domain. The KRAB domain maps to 155–230 (VTFEDMAVSL…LQEAFQGKHP (76 aa)). Positions 182–202 (ESAQKDSGSTVPPSLESRVEN) are disordered. Residues Lys-203, Lys-228, and Lys-254 each participate in a glycyl lysine isopeptide (Lys-Gly) (interchain with G-Cter in SUMO2) cross-link. The disordered stretch occupies residues 231 to 284 (LFSKCGSTHEDRVEKQSGNPLPLKLENSAEAEGLNSISDVNKNGSIEGEDSKNN). The span at 265–274 (NSISDVNKNG) shows a compositional bias: polar residues. Lys-282 participates in a covalent cross-link: Glycyl lysine isopeptide (Lys-Gly) (interchain with G-Cter in SUMO2). 7 consecutive C2H2-type zinc fingers follow at residues 358–380 (YKCG…QRIH), 386–408 (YGCQ…QRTH), 414–436 (YTCL…QSTH), 442–463 (FKCE…QRLH), 469–491 (YKCE…HRIH), 497–519 (YGCS…QRIH), and 525–547 (YKCL…QRIH). A Glycyl lysine isopeptide (Lys-Gly) (interchain with G-Cter in SUMO2) cross-link involves residue Lys-443.

Belongs to the krueppel C2H2-type zinc-finger protein family.

The protein resides in the nucleus. Functionally, may be involved in transcriptional regulation. This is Zinc finger protein 394 (ZNF394) from Pongo abelii (Sumatran orangutan).